Consider the following 60-residue polypeptide: Cecropin-B1 (60 aa).

The signal sequence occupies residues 1–24 (MNFSKVFALVLLIGLVLLTGHTEA).

Belongs to the cecropin family.

The protein resides in the secreted. Putative antimicrobial peptide. Partially neutralizes lipopolysaccharides (LPS). Exhibits anti-inflammatory properties: inhibits LPS-induced iNOS/NOS2 transcription, nitric oxide (NO) and pro-inflammatory cytokine production in mouse macrophages and human peripheral blood mononuclear cells (PBMCs); inhibits LPS-induced activation of MAPK and NF-kappa-B signaling pathways in mouse macrophages. The chain is Cecropin-B1 from Aedes aegypti (Yellowfever mosquito).